The chain runs to 178 residues: Peptide deformylase (178 aa).

Fe cation contacts are provided by Cys-92 and His-134. Glu-135 is a catalytic residue. His-138 is a Fe cation binding site.

Belongs to the polypeptide deformylase family. Fe(2+) serves as cofactor.

It catalyses the reaction N-terminal N-formyl-L-methionyl-[peptide] + H2O = N-terminal L-methionyl-[peptide] + formate. Functionally, removes the formyl group from the N-terminal Met of newly synthesized proteins. Requires at least a dipeptide for an efficient rate of reaction. N-terminal L-methionine is a prerequisite for activity but the enzyme has broad specificity at other positions. The sequence is that of Peptide deformylase from Alkalilimnicola ehrlichii (strain ATCC BAA-1101 / DSM 17681 / MLHE-1).